A 2453-amino-acid chain; its full sequence is Nuclear receptor corepressor 1 (2453 aa).

Residues 1 to 29 show a composition bias toward polar residues; the sequence is MSSSGYPPNQGAFSTEQSRYPSHSVQYTF. Disordered regions lie at residues 1-116, 147-177, and 206-231; these read MSSS…QVSD, PAFGVKHEAPSSPLSGQPCGDDQNASPSKLS, and QQQLEEEAAKPPEPEKPVSPPPVEQK. Residues 1–373 form an interaction with ZBTB33 and HEXIM1 region; that stretch reads MSSSGYPPNQ…QRGAGLSATI (373 aa). The span at 51 to 64 shows a compositional bias: low complexity; sequence SQASQLLQQQQQQQ. Basic and acidic residues-rich tracts occupy residues 77 to 88 and 99 to 116; these read PGSDRPQERRSG and VDHDSLESKRPRLEQVSD. S172 is subject to Phosphoserine. Positions 174–216 form a coiled coil; the sequence is SKLSKEELIQSMDRVDREIAKVEQQILKLKKKQQQLEEEAAKP. Over residues 212–221 the composition is skewed to basic and acidic residues; that stretch reads EAAKPPEPEK. S224 is subject to Phosphoserine. An interaction with SIN3A/B region spans residues 254 to 312; that stretch reads FEGLGPKVELPLYNQPSDTKVYHENIKTNQVMRKKLILFFKRRNHARKQREQKICQRYD. Residues 299–328 adopt a coiled-coil conformation; it reads ARKQREQKICQRYDQLMEAWEKKVDRIENN. The SANT 1 domain occupies 435–486; the sequence is QFMNVWTDHEKEIFKDKFIQHPKNFGLIASYLERKSVPDCVLYYYLTKKNEN. Disordered stretches follow at residues 497–631 and 677–908; these read KRRG…TEEE and LLQQ…PERQ. A coiled-coil region spans residues 501–550; the sequence is RNQQIARPSQEEKVEEKEEDKAEKTEKKEEEKKDDEEKDDKEDSKETTKE. Composition is skewed to basic and acidic residues over residues 509–531 and 541–556; these read SQEEKVEEKEEDKAEKTEKKEEE and KEDSKETTKEKDRTEA. Low complexity predominate over residues 592–604; the sequence is EAAAANAAAAATE. The span at 605–616 shows a compositional bias: pro residues; sequence EPPPPLPPPPEP. In terms of domain architecture, SANT 2 spans 622–673; the sequence is VETSRWTEEEMEVAKKGLVEHGRNWAAIAKMVGTKSEAQCKNFYFNYKRRHN. Positions 697 to 707 are enriched in polar residues; it reads QCESVASTVSA. Positions 708-727 are enriched in acidic residues; that stretch reads QEDEDIEASNEEENPEDSEG. A compositionally biased stretch (low complexity) spans 771–787; that stretch reads TTDPAPCASPSSAVPTT. Over residues 851 to 885 the composition is skewed to basic and acidic residues; that stretch reads GEGDAKERDLESTSEKTEARDEDVVVAEQIERPEP. S1011 bears the Phosphoserine mark. The interval 1034 to 1058 is disordered; the sequence is VRLPTTRPTRPPPPLIPSSKTTVAS. K1117 participates in a covalent cross-link: Glycyl lysine isopeptide (Lys-Gly) (interchain with G-Cter in SUMO1); alternate. K1117 participates in a covalent cross-link: Glycyl lysine isopeptide (Lys-Gly) (interchain with G-Cter in SUMO2); alternate. The residue at position 1122 (S1122) is a Phosphoserine. A Glycyl lysine isopeptide (Lys-Gly) (interchain with G-Cter in SUMO2) cross-link involves residue K1195. S1206, S1207, S1274, S1292, and S1333 each carry phosphoserine. K1347 carries the post-translational modification N6-acetyllysine. T1378 bears the Phosphothreonine mark. Residue K1400 forms a Glycyl lysine isopeptide (Lys-Gly) (interchain with G-Cter in SUMO2) linkage. A Glycyl lysine isopeptide (Lys-Gly) (interchain with G-Cter in SUMO2); alternate cross-link involves residue K1423. K1423 is subject to N6-acetyllysine; alternate. Positions 1450–1544 are disordered; it reads GEPVRARHTS…SIPAKSPVPG (95 aa). 2 positions are modified to phosphoserine: S1459 and S1481. Positions 1459–1469 are enriched in polar residues; the sequence is SVVSSGPSVLR. Positions 1495 to 1514 are enriched in polar residues; sequence VSYQNTISRGSPMMNRTSDV. Positions 1510–2453 are interaction with C1D; that stretch reads RTSDVSSSKS…QYETLSDSDD (944 aa). Residue K1525 forms a Glycyl lysine isopeptide (Lys-Gly) (interchain with G-Cter in SUMO2) linkage. S1598 is subject to Phosphoserine. Disordered stretches follow at residues 1697–1780 and 1902–1939; these read RPYN…VRTQ and ALPSGKAQPHASVVYSEAGKDKGPPPKSRYEEELRTRG. Basic and acidic residues-rich tracts occupy residues 1718–1745 and 1919–1937; these read AEREREREREKERERERERERERERERI and AGKDKGPPPKSRYEEELRT. The short motif at 1949 to 1953 is the CORNR box 1 element; that stretch reads IDVII. The segment at 1959-2060 is disordered; sequence SDKDARERGS…SSQSEGMGQV (102 aa). Over residues 1968–1979 the composition is skewed to low complexity; that stretch reads SQSSDSSSSLSS. Phosphoserine is present on residues S1993 and S1997. The segment at 2050–2129 is ID1; that stretch reads PSSQSEGMGQ…QSQTVLHPRP (80 aa). The interval 2065-2068 is required for interaction with RARA in the absence of its ligand; that stretch reads RLIT. The short motif at 2073-2077 is the CORNR box 2 element; that stretch reads ICQII. A compositionally biased stretch (polar residues) spans 2088 to 2124; it reads SQASTSTFQTSPSALSSTPVRTKTSSRYSPESQSQTV. A disordered region spans residues 2088–2174; that stretch reads SQASTSTFQT…SPPQGPAVHE (87 aa). S2116, S2134, S2150, S2165, and S2198 each carry phosphoserine. A compositionally biased stretch (basic and acidic residues) spans 2138-2156; sequence LVDKSRGSRPGKSPERSHI. Positions 2226–2287 are ID2; sequence IFRKLNSSGG…EDIIRKALMG (62 aa). The CORNR box 3 motif lies at 2277–2281; that stretch reads LEDII. Residues 2303–2396 form a disordered region; that stretch reads PVGIMPGSAS…RPSSTGSTQF (94 aa). The span at 2310–2319 shows a compositional bias: low complexity; that stretch reads SASTSVVTSS. At T2412 the chain carries Phosphothreonine. S2449 and S2451 each carry phosphoserine.

This sequence belongs to the N-CoR nuclear receptor corepressors family. As to quaternary structure, forms a large corepressor complex that contains SIN3A/B and histone deacetylases HDAC1 and HDAC2. This complex associates with the thyroid receptor (TR) and the retinoid acid receptor (RAR) in the absence of ligand. Interacts directly with RARA; the interaction is facilitated with RARA trimethylation. Component of the N-Cor repressor complex, at least composed of CBFA2T3, HEXIM1, NCOR1, NCOR2, HDAC3, TBL1X, TBL1XR1, CORO2A and GPS2. Interacts with ZBTB33; the interaction serves to recruit the N-CoR complex to promoter regions containing methylated CpG dinucleotides. Interacts with TRIM28 and KDM3A. Interacts (via the RD1 domain) with BAZ1A (via its N-terminal); the interaction corepresses a number of NCOR1-regulated genes. Interacts with BCL6, C1D, DACH1, HEXIM1, HDAC7, RORA, RORC, SAP30, SIAH2, SIN3A and SIN3B. May interact with DEAF1. Interacts with RXRA. Interacts with SETD5. Interacts with VDR. Interacts with ZBTB7A. Interacts with AR. Interacts with HDAC3. Post-translationally, ubiquitinated; mediated by SIAH2 and leading to its subsequent proteasomal degradation. Ubiquitous.

The protein resides in the nucleus. Mediates transcriptional repression by certain nuclear receptors. Part of a complex which promotes histone deacetylation and the formation of repressive chromatin structures which may impede the access of basal transcription factors. Participates in the transcriptional repressor activity produced by BCL6. Recruited by ZBTB7A to the androgen response elements/ARE on target genes, negatively regulates androgen receptor signaling and androgen-induced cell proliferation. Mediates the NR1D1-dependent repression and circadian regulation of TSHB expression. The NCOR1-HDAC3 complex regulates the circadian expression of the core clock gene ARTNL/BMAL1 and the genes involved in lipid metabolism in the liver. This is Nuclear receptor corepressor 1 (Ncor1) from Mus musculus (Mouse).